The primary structure comprises 425 residues: Glycosyl hydrolase family 109 protein 2 (425 aa).

NAD(+) contacts are provided by residues Asn29–Arg30, Glu51, Trp99–His102, Glu119–Val120, and Asn148. Tyr177 lines the substrate pocket. Residues Phe194–Trp198 and Tyr211 contribute to the NAD(+) site. Residues Tyr211–His214 and Tyr293 each bind substrate.

This sequence belongs to the Gfo/Idh/MocA family. Glycosyl hydrolase 109 subfamily. Requires NAD(+) as cofactor.

In terms of biological role, glycosidase. The protein is Glycosyl hydrolase family 109 protein 2 of Bacteroides fragilis (strain YCH46).